Here is a 468-residue protein sequence, read N- to C-terminus: ATP synthase subunit beta (468 aa).

155-162 (GGAGVGKT) provides a ligand contact to ATP.

It belongs to the ATPase alpha/beta chains family. F-type ATPases have 2 components, CF(1) - the catalytic core - and CF(0) - the membrane proton channel. CF(1) has five subunits: alpha(3), beta(3), gamma(1), delta(1), epsilon(1). CF(0) has three main subunits: a(1), b(2) and c(9-12). The alpha and beta chains form an alternating ring which encloses part of the gamma chain. CF(1) is attached to CF(0) by a central stalk formed by the gamma and epsilon chains, while a peripheral stalk is formed by the delta and b chains.

It is found in the cell inner membrane. The catalysed reaction is ATP + H2O + 4 H(+)(in) = ADP + phosphate + 5 H(+)(out). Produces ATP from ADP in the presence of a proton gradient across the membrane. The catalytic sites are hosted primarily by the beta subunits. This Thermotoga petrophila (strain ATCC BAA-488 / DSM 13995 / JCM 10881 / RKU-1) protein is ATP synthase subunit beta.